The sequence spans 379 residues: Chaperone protein DnaJ (379 aa).

The J domain occupies 5–70; the sequence is DYYESLGVAK…QKRAAYDQYG (66 aa). The CR-type zinc finger occupies 134–212; sequence GVTKEIRIPA…CHGHGRVEKS (79 aa). Positions 147, 150, 164, 167, 186, 189, 200, and 203 each coordinate Zn(2+). 4 CXXCXGXG motif repeats span residues 147 to 154, 164 to 171, 186 to 193, and 200 to 207; these read CDVCHGNG, CPTCHGNG, CPHCHGRG, and CIKCHGHG.

This sequence belongs to the DnaJ family. Homodimer. It depends on Zn(2+) as a cofactor.

The protein resides in the cytoplasm. Functionally, participates actively in the response to hyperosmotic and heat shock by preventing the aggregation of stress-denatured proteins and by disaggregating proteins, also in an autonomous, DnaK-independent fashion. Unfolded proteins bind initially to DnaJ; upon interaction with the DnaJ-bound protein, DnaK hydrolyzes its bound ATP, resulting in the formation of a stable complex. GrpE releases ADP from DnaK; ATP binding to DnaK triggers the release of the substrate protein, thus completing the reaction cycle. Several rounds of ATP-dependent interactions between DnaJ, DnaK and GrpE are required for fully efficient folding. Also involved, together with DnaK and GrpE, in the DNA replication of plasmids through activation of initiation proteins. The sequence is that of Chaperone protein DnaJ from Pectobacterium atrosepticum (strain SCRI 1043 / ATCC BAA-672) (Erwinia carotovora subsp. atroseptica).